Consider the following 473-residue polypeptide: MILEHHFASLGHAFSSKTHVQPLIEQRLVEFNQSLASFLSIDIKSTETKCILSGEEALPYSLSMVYAGHQFGGFSPQLGDGRGVLLGEVRGQDGLLYDLHMKGAGPTPYSRRGDGRAVLRSCIREYLASEAMTALSVPSSRALALYDSREAVYRETPEAGAMLLRVAQGHIRFGHFEYFFYQGKQAELDQLIEYCLEHYYPECLATDSPLESMLTEVVKRTARMIAKWQAIGFQHGVMNTDNFSFTGETIDYGPYGFMEDYEPDWVCNHSDHEGRYAFSRQPGVGLWNLNCLMRCFSKHLERDQLIAILQCYEPELQTHYDSLMMSKMGLTSTQDVHELLPALFTILAAEKMDYTVFFRLLSHYEQGEFAFLLDEVIDRERLLAWLERYEVARDKGGLLWSQASASMLAVNPKFILRNYLAHEAIVAAEQGDYLPFRRLLNVLTHPFGEHSESESLAQRAPEWGKSLEVSCSS.

Positions 79, 81, 82, 102, 114, 115, 165, and 172 each coordinate ATP. Catalysis depends on aspartate 241, which acts as the Proton acceptor. Mg(2+) contacts are provided by asparagine 242 and aspartate 251. Aspartate 251 contacts ATP.

Belongs to the SELO family. Mg(2+) serves as cofactor. It depends on Mn(2+) as a cofactor.

The catalysed reaction is L-seryl-[protein] + ATP = 3-O-(5'-adenylyl)-L-seryl-[protein] + diphosphate. It catalyses the reaction L-threonyl-[protein] + ATP = 3-O-(5'-adenylyl)-L-threonyl-[protein] + diphosphate. It carries out the reaction L-tyrosyl-[protein] + ATP = O-(5'-adenylyl)-L-tyrosyl-[protein] + diphosphate. The enzyme catalyses L-histidyl-[protein] + UTP = N(tele)-(5'-uridylyl)-L-histidyl-[protein] + diphosphate. The catalysed reaction is L-seryl-[protein] + UTP = O-(5'-uridylyl)-L-seryl-[protein] + diphosphate. It catalyses the reaction L-tyrosyl-[protein] + UTP = O-(5'-uridylyl)-L-tyrosyl-[protein] + diphosphate. In terms of biological role, nucleotidyltransferase involved in the post-translational modification of proteins. It can catalyze the addition of adenosine monophosphate (AMP) or uridine monophosphate (UMP) to a protein, resulting in modifications known as AMPylation and UMPylation. This Marinomonas sp. (strain MWYL1) protein is Protein nucleotidyltransferase YdiU.